We begin with the raw amino-acid sequence, 243 residues long: MQISYFHVPAEMPQDLRPDAAVVIDVLRATTTIARALHNGAEAVQAFASLEDLRAAAAEWPADARLLLGERGGQMLEGFDLGNSPVAVTPEQVAGKRLFMSTTNGTRALDRVREVPLLLTAALPNREAVAQRVLAKQPSHVAIVGSGWEGAYSLEDSLAAGALGHRLLELDPTGSSAANDELTAAVSLWRQWQSDPEACLRTATHGQRLIRLGDHDADFRCCAGLDQLGVVPTQVEPGVLRAA.

The protein belongs to the ComB family. It depends on Mg(2+) as a cofactor.

It catalyses the reaction (2R)-O-phospho-3-sulfolactate + H2O = (2R)-3-sulfolactate + phosphate. The protein is Probable 2-phosphosulfolactate phosphatase of Synechococcus sp. (strain CC9605).